Reading from the N-terminus, the 253-residue chain is MRILLSNDDGVHAPGIQTLAKALREFADVQVVAPDRNRSGASNSLTLESSLRTFTFENGDIAVQMGTPTDCVYLGVNALMRPRPDIVVSGINAGPNLGDDVIYSGTVAAAMEGRHLGFPALAVSLDGHKHYDTAAAVTCSILRALCKEPLRTGRILNINVPDLPLDQIKGIRVTRCGTRHPADQVIPQQDPRGNTLYWIGPPGGKCDAGPGTDFAAVDEGYVSITPLHVDLTAHSAQYVVSDWLNSVGVGTQW.

A divalent metal cation contacts are provided by Asp8, Asp9, Ser39, and Asn92.

The protein belongs to the SurE nucleotidase family. The cofactor is a divalent metal cation.

It is found in the cytoplasm. It carries out the reaction a ribonucleoside 5'-phosphate + H2O = a ribonucleoside + phosphate. It catalyses the reaction a ribonucleoside 3'-phosphate + H2O = a ribonucleoside + phosphate. The catalysed reaction is [phosphate](n) + H2O = [phosphate](n-1) + phosphate + H(+). In terms of biological role, nucleotidase with a broad substrate specificity as it can dephosphorylate various ribo- and deoxyribonucleoside 5'-monophosphates and ribonucleoside 3'-monophosphates with highest affinity to 3'-AMP. Also hydrolyzes polyphosphate (exopolyphosphatase activity) with the preference for short-chain-length substrates (P20-25). Might be involved in the regulation of dNTP and NTP pools, and in the turnover of 3'-mononucleotides produced by numerous intracellular RNases (T1, T2, and F) during the degradation of various RNAs. The chain is 5'/3'-nucleotidase SurE from Escherichia coli O7:K1 (strain IAI39 / ExPEC).